The following is a 287-amino-acid chain: 4-hydroxybenzoate octaprenyltransferase (287 aa).

9 helical membrane-spanning segments follow: residues 20–40, 43–63, 94–114, 115–135, 137–157, 159–179, 210–230, 235–255, and 266–286; these read IGSL…ADGL, MHVL…GCVI, LGLF…MNTL, TIML…MKRY, HLPQ…AYAA, AGEL…WTIA, IIIG…GHSL, IYYW…RLIG, and FLNN…SVMM.

It belongs to the UbiA prenyltransferase family. The cofactor is Mg(2+).

It localises to the cell inner membrane. The catalysed reaction is all-trans-octaprenyl diphosphate + 4-hydroxybenzoate = 4-hydroxy-3-(all-trans-octaprenyl)benzoate + diphosphate. It participates in cofactor biosynthesis; ubiquinone biosynthesis. Catalyzes the prenylation of para-hydroxybenzoate (PHB) with an all-trans polyprenyl group. Mediates the second step in the final reaction sequence of ubiquinone-8 (UQ-8) biosynthesis, which is the condensation of the polyisoprenoid side chain with PHB, generating the first membrane-bound Q intermediate 3-octaprenyl-4-hydroxybenzoate. The chain is 4-hydroxybenzoate octaprenyltransferase from Photobacterium profundum (strain SS9).